The chain runs to 146 residues: Large ribosomal subunit protein uL15 (146 aa).

The tract at residues 1–57 (MDLSNLKAAEGSVHSDNFRRGRGHGSGNGKTAGKGHKGQKARSGAPRPGFEGGQMPL) is disordered.

It belongs to the universal ribosomal protein uL15 family. In terms of assembly, part of the 50S ribosomal subunit.

Functionally, binds to the 23S rRNA. The sequence is that of Large ribosomal subunit protein uL15 from Agathobacter rectalis (strain ATCC 33656 / DSM 3377 / JCM 17463 / KCTC 5835 / VPI 0990) (Eubacterium rectale).